The following is a 513-amino-acid chain: Anthranilate synthase component 1 (513 aa).

Residues Ser50 and 279–281 (PYM) contribute to the L-tryptophan site. 314-315 (GT) serves as a coordination point for chorismate. Glu341 contacts Mg(2+). Chorismate contacts are provided by residues Tyr429, Arg449, 463-465 (GAG), and Gly465. A Mg(2+)-binding site is contributed by Glu478.

It belongs to the anthranilate synthase component I family. In terms of assembly, heterotetramer consisting of two non-identical subunits: a beta subunit (TrpG) and a large alpha subunit (TrpE). Mg(2+) serves as cofactor.

It carries out the reaction chorismate + L-glutamine = anthranilate + pyruvate + L-glutamate + H(+). Its pathway is amino-acid biosynthesis; L-tryptophan biosynthesis; L-tryptophan from chorismate: step 1/5. Its activity is regulated as follows. Feedback inhibited by tryptophan. Functionally, part of a heterotetrameric complex that catalyzes the two-step biosynthesis of anthranilate, an intermediate in the biosynthesis of L-tryptophan. In the first step, the glutamine-binding beta subunit (TrpG) of anthranilate synthase (AS) provides the glutamine amidotransferase activity which generates ammonia as a substrate that, along with chorismate, is used in the second step, catalyzed by the large alpha subunit of AS (TrpE) to produce anthranilate. In the absence of TrpG, TrpE can synthesize anthranilate directly from chorismate and high concentrations of ammonia. This chain is Anthranilate synthase component 1 (trpE), found in Bacillus pumilus (Bacillus mesentericus).